A 229-amino-acid polypeptide reads, in one-letter code: Endo-1,4-beta-xylanase 1 (229 aa).

An N-terminal signal peptide occupies residues methionine 1–alanine 19. A propeptide spanning residues methionine 20–arginine 51 is cleaved from the precursor. The N-linked (GlcNAc...) asparagine glycan is linked to asparagine 31. Residues leucine 42–serine 228 form the GH11 domain. Tyrosine 117 is a substrate binding site. Glutamate 126 serves as the catalytic Nucleophile. Substrate-binding residues include tyrosine 128, arginine 160, proline 164, glutamine 174, and tyrosine 209. Glutamate 215 (proton donor) is an active-site residue.

Belongs to the glycosyl hydrolase 11 (cellulase G) family.

The protein localises to the secreted. The catalysed reaction is Endohydrolysis of (1-&gt;4)-beta-D-xylosidic linkages in xylans.. It participates in glycan degradation; xylan degradation. Its function is as follows. Glycoside hydrolase involved in the hydrolysis of xylan, a major plant cell wall hemicellulose made up of 1,4-beta-linked D-xylopyranose residues. Catalyzes the endohydrolysis of the main-chain 1,4-beta-glycosidic bonds connecting the xylose subunits yielding various xylooligosaccharides and xylose. The polypeptide is Endo-1,4-beta-xylanase 1 (Hypocrea jecorina (strain QM6a) (Trichoderma reesei)).